The chain runs to 630 residues: Transposase B from transposon PsiTn554 (630 aa).

A Core-binding (CB) domain is found at threonine 216–histidine 302. One can recognise a Tyr recombinase domain in the interval alanine 326–threonine 513. Active-site residues include arginine 363, lysine 391, histidine 465, arginine 468, and histidine 491. Tyrosine 500 (O-(3'-phospho-DNA)-tyrosine intermediate) is an active-site residue.

This sequence belongs to the 'phage' integrase family.

This chain is Transposase B from transposon PsiTn554 (tnpB), found in Staphylococcus aureus.